A 125-amino-acid chain; its full sequence is Small ribosomal subunit protein uS13 (125 aa).

Residues 92 to 125 (RRSLPARGQRTRTNARTRKGKRKTVAGKKKAGKK) form a disordered region.

Belongs to the universal ribosomal protein uS13 family. As to quaternary structure, part of the 30S ribosomal subunit. Forms a loose heterodimer with protein S19. Forms two bridges to the 50S subunit in the 70S ribosome.

Located at the top of the head of the 30S subunit, it contacts several helices of the 16S rRNA. In the 70S ribosome it contacts the 23S rRNA (bridge B1a) and protein L5 of the 50S subunit (bridge B1b), connecting the 2 subunits; these bridges are implicated in subunit movement. Contacts the tRNAs in the A and P-sites. In Chlorobaculum parvum (strain DSM 263 / NCIMB 8327) (Chlorobium vibrioforme subsp. thiosulfatophilum), this protein is Small ribosomal subunit protein uS13.